We begin with the raw amino-acid sequence, 231 residues long: Phosphatidylserine decarboxylase proenzyme (231 aa).

Serine 188 (schiff-base intermediate with substrate; via pyruvic acid) is an active-site residue. Serine 188 is modified (pyruvic acid (Ser); by autocatalysis).

The protein belongs to the phosphatidylserine decarboxylase family. PSD-A subfamily. As to quaternary structure, heterodimer of a large membrane-associated beta subunit and a small pyruvoyl-containing alpha subunit. Pyruvate serves as cofactor. In terms of processing, is synthesized initially as an inactive proenzyme. Formation of the active enzyme involves a self-maturation process in which the active site pyruvoyl group is generated from an internal serine residue via an autocatalytic post-translational modification. Two non-identical subunits are generated from the proenzyme in this reaction, and the pyruvate is formed at the N-terminus of the alpha chain, which is derived from the carboxyl end of the proenzyme. The post-translation cleavage follows an unusual pathway, termed non-hydrolytic serinolysis, in which the side chain hydroxyl group of the serine supplies its oxygen atom to form the C-terminus of the beta chain, while the remainder of the serine residue undergoes an oxidative deamination to produce ammonia and the pyruvoyl prosthetic group on the alpha chain.

The protein resides in the cell membrane. It catalyses the reaction a 1,2-diacyl-sn-glycero-3-phospho-L-serine + H(+) = a 1,2-diacyl-sn-glycero-3-phosphoethanolamine + CO2. Its pathway is phospholipid metabolism; phosphatidylethanolamine biosynthesis; phosphatidylethanolamine from CDP-diacylglycerol: step 2/2. Catalyzes the formation of phosphatidylethanolamine (PtdEtn) from phosphatidylserine (PtdSer). In Rickettsia prowazekii (strain Madrid E), this protein is Phosphatidylserine decarboxylase proenzyme.